A 186-amino-acid chain; its full sequence is dCTP deaminase (186 aa).

DCTP is bound at residue K107 to R112. E133 acts as the Proton donor/acceptor in catalysis. Positions 152, 166, and 176 each coordinate dCTP.

This sequence belongs to the dCTP deaminase family. Homotrimer.

The catalysed reaction is dCTP + H2O + H(+) = dUTP + NH4(+). Its pathway is pyrimidine metabolism; dUMP biosynthesis; dUMP from dCTP (dUTP route): step 1/2. Catalyzes the deamination of dCTP to dUTP. The sequence is that of dCTP deaminase from Campylobacter jejuni subsp. jejuni serotype O:6 (strain 81116 / NCTC 11828).